Consider the following 228-residue polypeptide: 2-C-methyl-D-erythritol 4-phosphate cytidylyltransferase (228 aa).

This sequence belongs to the IspD/TarI cytidylyltransferase family. IspD subfamily.

The enzyme catalyses 2-C-methyl-D-erythritol 4-phosphate + CTP + H(+) = 4-CDP-2-C-methyl-D-erythritol + diphosphate. The protein operates within isoprenoid biosynthesis; isopentenyl diphosphate biosynthesis via DXP pathway; isopentenyl diphosphate from 1-deoxy-D-xylulose 5-phosphate: step 2/6. In terms of biological role, catalyzes the formation of 4-diphosphocytidyl-2-C-methyl-D-erythritol from CTP and 2-C-methyl-D-erythritol 4-phosphate (MEP). This chain is 2-C-methyl-D-erythritol 4-phosphate cytidylyltransferase, found in Geobacillus thermodenitrificans (strain NG80-2).